A 230-amino-acid chain; its full sequence is Small ribosomal subunit protein uS3 (230 aa).

The KH type-2 domain occupies 39-107 (VREYLFKRLK…PVHINIEEVR (69 aa)).

The protein belongs to the universal ribosomal protein uS3 family. As to quaternary structure, part of the 30S ribosomal subunit. Forms a tight complex with proteins S10 and S14.

Binds the lower part of the 30S subunit head. Binds mRNA in the 70S ribosome, positioning it for translation. This Alcanivorax borkumensis (strain ATCC 700651 / DSM 11573 / NCIMB 13689 / SK2) protein is Small ribosomal subunit protein uS3.